The following is a 437-amino-acid chain: Phosphoglucosamine mutase (437 aa).

The active-site Phosphoserine intermediate is serine 93. Serine 93, aspartate 230, aspartate 232, and aspartate 234 together coordinate Mg(2+). Serine 93 is subject to Phosphoserine.

This sequence belongs to the phosphohexose mutase family. It depends on Mg(2+) as a cofactor. Post-translationally, activated by phosphorylation.

It carries out the reaction alpha-D-glucosamine 1-phosphate = D-glucosamine 6-phosphate. Functionally, catalyzes the conversion of glucosamine-6-phosphate to glucosamine-1-phosphate. The chain is Phosphoglucosamine mutase from Clavibacter michiganensis subsp. michiganensis (strain NCPPB 382).